A 347-amino-acid polypeptide reads, in one-letter code: S-adenosylmethionine decarboxylase proenzyme 4 (347 aa).

Residues glutamate 7 and glutamate 10 contribute to the active site. Residue glutamate 66 coordinates substrate. Serine 67 functions as the Schiff-base intermediate with substrate; via pyruvic acid in the catalytic mechanism. Pyruvic acid (Ser); by autocatalysis is present on serine 67. Cysteine 81 acts as the Proton donor; for catalytic activity in catalysis. Active-site proton acceptor; for processing activity residues include serine 237 and histidine 250. Glutamate 254 is a substrate binding site.

The protein belongs to the eukaryotic AdoMetDC family. Pyruvate is required as a cofactor. In terms of processing, is synthesized initially as an inactive proenzyme. Formation of the active enzyme involves a self-maturation process in which the active site pyruvoyl group is generated from an internal serine residue via an autocatalytic post-translational modification. Two non-identical subunits are generated from the proenzyme in this reaction, and the pyruvate is formed at the N-terminus of the alpha chain, which is derived from the carboxyl end of the proenzyme. The post-translation cleavage follows an unusual pathway, termed non-hydrolytic serinolysis, in which the side chain hydroxyl group of the serine supplies its oxygen atom to form the C-terminus of the beta chain, while the remainder of the serine residue undergoes an oxidative deamination to produce ammonia and the pyruvoyl group blocking the N-terminus of the alpha chain.

The enzyme catalyses S-adenosyl-L-methionine + H(+) = S-adenosyl 3-(methylsulfanyl)propylamine + CO2. It participates in amine and polyamine biosynthesis; S-adenosylmethioninamine biosynthesis; S-adenosylmethioninamine from S-adenosyl-L-methionine: step 1/1. Functionally, essential for biosynthesis of the polyamines spermidine and spermine. Essential for polyamine homeostasis, and normal plant embryogenesis, growth and development. The sequence is that of S-adenosylmethionine decarboxylase proenzyme 4 from Arabidopsis thaliana (Mouse-ear cress).